A 63-amino-acid polypeptide reads, in one-letter code: Large ribosomal subunit protein uL29 (63 aa).

Belongs to the universal ribosomal protein uL29 family.

The polypeptide is Large ribosomal subunit protein uL29 (Actinobacillus succinogenes (strain ATCC 55618 / DSM 22257 / CCUG 43843 / 130Z)).